The sequence spans 450 residues: Probable ECA polymerase (450 aa).

The next 11 membrane-spanning stretches (helical) occupy residues 6-26 (FSGL…LTWF), 37-57 (VFFS…TSVL), 63-83 (VGVA…CFYA), 118-138 (VILM…NGFL), 155-175 (GVAL…VYFL), 181-201 (AWLF…MIVG), 207-227 (IIIA…ISLW), 228-248 (MLAA…LKRY), 341-361 (LVVM…GLII), 378-398 (YKAA…IVLA), and 410-430 (VFFI…YWLF).

This sequence belongs to the WzyE family. As to quaternary structure, probably part of a complex composed of WzxE, WzyE and WzzE.

It localises to the cell inner membrane. It participates in bacterial outer membrane biogenesis; enterobacterial common antigen biosynthesis. Functionally, probably involved in the polymerization of enterobacterial common antigen (ECA) trisaccharide repeat units. The polypeptide is Probable ECA polymerase (Escherichia coli O17:K52:H18 (strain UMN026 / ExPEC)).